We begin with the raw amino-acid sequence, 420 residues long: MSRRYLFTSESVTEGHPDKICDQISDTILDTLLTQDPTSRVAAEVVVNTGLVLITGEITTKANVNYANIARQKIAEIGYTNADNGFSASSTSVIVALDEQSPDIAQGVNTAQETREQDSEELFDKIGAGDQGIMFGFACNETPELMPLPICLAHRIARRLAAVRKTGELSYLRPDGKTQVTVVYEDGRPVGIDTVLISTQHTATIGDITDEAAVQAKIKQDLWTAVVEPVFGDLEIKPDQETRFLVNPTGKFVIGGPQGDSGLTGRKIIVDTYGGYSRHGGGAFSGKDPTKVDRSAAYAARYVAKNIVAAGLAEKCEVQLSYAIGVARPVSIFLDTFGTGKVDDEILLGLVKDNFELRPAGIIHSFNLRNLPSERGGRFYQDVAAYGHLGRNDLDLPWERTDKADFLKQAVTHSLSAAIA.

His-16 serves as a coordination point for ATP. Asp-18 is a binding site for Mg(2+). Glu-44 provides a ligand contact to K(+). Residues Glu-57 and Gln-100 each coordinate L-methionine. A flexible loop region spans residues 100 to 110; that stretch reads QSPDIAQGVNT. Residues 175–177, 251–252, Asp-260, 266–267, Ala-283, and Lys-287 contribute to the ATP site; these read DGK, KF, and RK. Asp-260 provides a ligand contact to L-methionine. Lys-291 is a binding site for L-methionine.

This sequence belongs to the AdoMet synthase family. As to quaternary structure, homotetramer; dimer of dimers. Mg(2+) is required as a cofactor. Requires K(+) as cofactor.

Its subcellular location is the cytoplasm. The catalysed reaction is L-methionine + ATP + H2O = S-adenosyl-L-methionine + phosphate + diphosphate. Its pathway is amino-acid biosynthesis; S-adenosyl-L-methionine biosynthesis; S-adenosyl-L-methionine from L-methionine: step 1/1. Catalyzes the formation of S-adenosylmethionine (AdoMet) from methionine and ATP. The overall synthetic reaction is composed of two sequential steps, AdoMet formation and the subsequent tripolyphosphate hydrolysis which occurs prior to release of AdoMet from the enzyme. In Trichormus variabilis (strain ATCC 29413 / PCC 7937) (Anabaena variabilis), this protein is S-adenosylmethionine synthase.